The chain runs to 445 residues: 2-oxoisovalerate dehydrogenase subunit alpha, mitochondrial (445 aa).

Residues M1–F45 constitute a mitochondrion transit peptide. Thiamine diphosphate-binding residues include Y158 and R159. S206 contributes to the K(+) binding site. S207 contacts thiamine diphosphate. The K(+) site is built by P208, T211, and Q212. E238 is a binding site for Mg(2+). Residues G239, A240, and R265 each contribute to the thiamine diphosphate site. Mg(2+)-binding residues include N267 and Y269. Residue H336 coordinates thiamine diphosphate. S337 carries the phosphoserine; by BCKDK modification. T338 is subject to Phosphothreonine. Phosphoserine occurs at positions 339 and 347. K356 is subject to N6-acetyllysine; alternate. The residue at position 356 (K356) is an N6-succinyllysine; alternate. K380 carries the N6-succinyllysine modification.

It belongs to the BCKDHA family. Heterotetramer of 2 alpha/BCKDHA and 2 beta chains/BCKDHB that forms the branched-chain alpha-keto acid decarboxylase (E1) component of the BCKD complex. The branched-chain alpha-ketoacid dehydrogenase is a large complex composed of three major building blocks E1, E2 and E3. It is organized around E2, a 24-meric cubic core composed of DBT, to which are associated 6 to 12 copies of E1, and approximately 6 copies of the dehydrogenase E3, a DLD dimer. Interacts with PPM1K. It depends on thiamine diphosphate as a cofactor. Mg(2+) is required as a cofactor. Phosphorylated at Ser-337 by BCKDK and dephosphorylated by protein phosphatase PPM1K.

It is found in the mitochondrion matrix. It carries out the reaction N(6)-[(R)-lipoyl]-L-lysyl-[protein] + 3-methyl-2-oxobutanoate + H(+) = N(6)-[(R)-S(8)-2-methylpropanoyldihydrolipoyl]-L-lysyl-[protein] + CO2. Its function is as follows. Together with BCKDHB forms the heterotetrameric E1 subunit of the mitochondrial branched-chain alpha-ketoacid dehydrogenase (BCKD) complex. The BCKD complex catalyzes the multi-step oxidative decarboxylation of alpha-ketoacids derived from the branched-chain amino-acids valine, leucine and isoleucine producing CO2 and acyl-CoA which is subsequently utilized to produce energy. The E1 subunit catalyzes the first step with the decarboxylation of the alpha-ketoacid forming an enzyme-product intermediate. A reductive acylation mediated by the lipoylamide cofactor of E2 extracts the acyl group from the E1 active site for the next step of the reaction. In Macaca fascicularis (Crab-eating macaque), this protein is 2-oxoisovalerate dehydrogenase subunit alpha, mitochondrial (BCKDHA).